We begin with the raw amino-acid sequence, 414 residues long: NAD-specific glutamate dehydrogenase (414 aa).

Substrate-binding residues include Lys-70 and Lys-94. Lys-106 serves as the catalytic Proton donor. Residues Thr-190 and Asn-221 each coordinate NAD(+). A substrate-binding site is contributed by Ser-348.

It belongs to the Glu/Leu/Phe/Val dehydrogenases family. Homohexamer.

It carries out the reaction L-glutamate + NAD(+) + H2O = 2-oxoglutarate + NH4(+) + NADH + H(+). This is NAD-specific glutamate dehydrogenase (gluD) from Staphylococcus aureus (strain COL).